The primary structure comprises 193 residues: MIGRIAGTLIEKNPPHLLVDCHGVGYEIDVPMSTFYNLPATGEKVALLTQQIVREDAHLLYGFGTAAERETFRQLIKISGIGARIALAVLSGMSVAELAQAVTLQEAGRLTRIPGIGKKTAERLLLELKGKLGADLGTVPGGPAVSDDAVDVLNALLALGYSDKEAAQAIKQVPAGTGVSEGIKLALKALSKG.

The domain I stretch occupies residues 1-64; the sequence is MIGRIAGTLI…EDAHLLYGFG (64 aa). Residues 65–143 are domain II; sequence TAAERETFRQ…ADLGTVPGGP (79 aa). The tract at residues 144–151 is flexible linker; it reads AVSDDAVD. The tract at residues 151–193 is domain III; the sequence is DVLNALLALGYSDKEAAQAIKQVPAGTGVSEGIKLALKALSKG.

The protein belongs to the RuvA family. Homotetramer. Forms an RuvA(8)-RuvB(12)-Holliday junction (HJ) complex. HJ DNA is sandwiched between 2 RuvA tetramers; dsDNA enters through RuvA and exits via RuvB. An RuvB hexamer assembles on each DNA strand where it exits the tetramer. Each RuvB hexamer is contacted by two RuvA subunits (via domain III) on 2 adjacent RuvB subunits; this complex drives branch migration. In the full resolvosome a probable DNA-RuvA(4)-RuvB(12)-RuvC(2) complex forms which resolves the HJ.

The protein localises to the cytoplasm. The RuvA-RuvB-RuvC complex processes Holliday junction (HJ) DNA during genetic recombination and DNA repair, while the RuvA-RuvB complex plays an important role in the rescue of blocked DNA replication forks via replication fork reversal (RFR). RuvA specifically binds to HJ cruciform DNA, conferring on it an open structure. The RuvB hexamer acts as an ATP-dependent pump, pulling dsDNA into and through the RuvAB complex. HJ branch migration allows RuvC to scan DNA until it finds its consensus sequence, where it cleaves and resolves the cruciform DNA. The chain is Holliday junction branch migration complex subunit RuvA from Ralstonia nicotianae (strain ATCC BAA-1114 / GMI1000) (Ralstonia solanacearum).